The following is a 104-amino-acid chain: Replication restart protein PriB (104 aa).

One can recognise an SSB domain in the interval 1–101 (MTNRLVLSGT…LHAEQIELID (101 aa)).

The protein belongs to the PriB family. Homodimer. Interacts with PriA and DnaT. Component of the replication restart primosome. Primosome assembly occurs via a 'hand-off' mechanism. PriA binds to replication forks, subsequently PriB then DnaT bind; DnaT then displaces ssDNA to generate the helicase loading substrate.

In terms of biological role, involved in the restart of stalled replication forks, which reloads the replicative helicase on sites other than the origin of replication; the PriA-PriB pathway is the major replication restart pathway. During primosome assembly it facilitates complex formation between PriA and DnaT on DNA; stabilizes PriA on DNA. Stimulates the DNA unwinding activity of PriA helicase. This chain is Replication restart protein PriB, found in Shigella dysenteriae serotype 1 (strain Sd197).